Here is a 213-residue protein sequence, read N- to C-terminus: LexA repressor (213 aa).

Residues 29-49 (VREICNAVGFKSTSTVHSYLE) constitute a DNA-binding region (H-T-H motif). Residues serine 136 and lysine 173 each act as for autocatalytic cleavage activity in the active site.

The protein belongs to the peptidase S24 family. As to quaternary structure, homodimer.

The enzyme catalyses Hydrolysis of Ala-|-Gly bond in repressor LexA.. Represses a number of genes involved in the response to DNA damage (SOS response), including recA and lexA. In the presence of single-stranded DNA, RecA interacts with LexA causing an autocatalytic cleavage which disrupts the DNA-binding part of LexA, leading to derepression of the SOS regulon and eventually DNA repair. The sequence is that of LexA repressor from Acetivibrio thermocellus (strain ATCC 27405 / DSM 1237 / JCM 9322 / NBRC 103400 / NCIMB 10682 / NRRL B-4536 / VPI 7372) (Clostridium thermocellum).